We begin with the raw amino-acid sequence, 459 residues long: Putrescine aminotransferase (459 aa).

Residues 150-151 and Gln274 each bind pyridoxal 5'-phosphate; that span reads GT. Lys300 carries the N6-(pyridoxal phosphate)lysine modification. A pyridoxal 5'-phosphate-binding site is contributed by Thr332.

The protein belongs to the class-III pyridoxal-phosphate-dependent aminotransferase family. Putrescine aminotransferase subfamily. The cofactor is pyridoxal 5'-phosphate.

The enzyme catalyses an alkane-alpha,omega-diamine + 2-oxoglutarate = an omega-aminoaldehyde + L-glutamate. It carries out the reaction putrescine + 2-oxoglutarate = 1-pyrroline + L-glutamate + H2O. The catalysed reaction is cadaverine + 2-oxoglutarate = 5-aminopentanal + L-glutamate. It participates in amine and polyamine degradation; putrescine degradation; 4-aminobutanal from putrescine (transaminase route): step 1/1. Functionally, catalyzes the aminotransferase reaction from putrescine to 2-oxoglutarate, leading to glutamate and 4-aminobutanal, which spontaneously cyclizes to form 1-pyrroline. This is the first step in one of two pathways for putrescine degradation, where putrescine is converted into 4-aminobutanoate (gamma-aminobutyrate or GABA) via 4-aminobutanal. Also functions as a cadaverine transaminase in a a L-lysine degradation pathway to succinate that proceeds via cadaverine, glutarate and L-2-hydroxyglutarate. The chain is Putrescine aminotransferase from Salmonella agona (strain SL483).